Here is a 397-residue protein sequence, read N- to C-terminus: MALLRGVFIVAAKRTPFGAYGGLLKDFTPTDMAEFAARAALSAGRVSPETVDSVVVGNVMQSSSDAIYLARHVGLRVGIPKETPAITINRLCGSGFQSIVSGCQEICSRDSEVVLCGGTESMSQAPYCVRNIRFGTKLGSELKLEDTLWTGLTDTHVQMPMAITAENLAVKHQISREDCDRYALQSQQRWKTANDAGYFDNEMAPVEVKTRKGKQTMQVDEHPRPQTTMEQLNKLPPVFKKEGTVTAGNASGVSDGAGAVIIASEDAVKKHNFTPLARIVGYFVSGCDPTIMGIGPVPAISGALKKTGLSLKDMDLVEVNEAFAPQYLAVEKSLNLDPSKTNVNGGAIALGHPLAGSGSRITAHLVHELRRRGGKYAVGSACIGGGQGIAVIIENTA.

The transit peptide at 1-16 (MALLRGVFIVAAKRTP) directs the protein to the mitochondrion; not cleaved. Lys25 carries the N6-acetyllysine; alternate modification. Lys25 carries the N6-succinyllysine; alternate modification. The Acyl-thioester intermediate role is filled by Cys92. At Thr119 the chain carries Phosphothreonine. Residue Ser121 is modified to Phosphoserine. Tyr127 bears the Phosphotyrosine mark. Thr136 carries the phosphothreonine modification. Lys137 carries the post-translational modification N6-acetyllysine; alternate. An N6-succinyllysine; alternate modification is found at Lys137. Ser140 is modified (phosphoserine). Lys143, Lys171, Lys191, and Lys209 each carry N6-acetyllysine; alternate. N6-succinyllysine; alternate occurs at positions 143, 171, 191, and 209. N6-succinyllysine occurs at positions 212 and 214. Residues Arg224 and Thr227 each coordinate CoA. Residue Lys234 is modified to N6-acetyllysine; alternate. The residue at position 234 (Lys234) is an N6-succinyllysine; alternate. An N6-succinyllysine modification is found at Lys240. N6-acetyllysine is present on Lys241. Ser251 is a binding site for CoA. 2 positions are modified to N6-acetyllysine: Lys269 and Lys270. At Lys305 the chain carries N6-acetyllysine; alternate. Lys305 is subject to N6-succinyllysine; alternate. Position 310 is a phosphoserine (Ser310). Lys312 bears the N6-acetyllysine; alternate mark. Lys312 is subject to N6-succinyllysine; alternate. A Phosphoserine modification is found at Ser333. N6-acetyllysine is present on residues Lys340 and Lys375. The Proton donor/acceptor role is filled by Cys382.

Belongs to the thiolase-like superfamily. Thiolase family. Homotetramer. Interacts with BNIP3.

The protein resides in the mitochondrion. The enzyme catalyses an acyl-CoA + acetyl-CoA = a 3-oxoacyl-CoA + CoA. It catalyses the reaction 2 acetyl-CoA = acetoacetyl-CoA + CoA. It carries out the reaction acetyl-CoA + H2O = acetate + CoA + H(+). The catalysed reaction is propanoyl-CoA + H2O = propanoate + CoA + H(+). The enzyme catalyses butanoyl-CoA + H2O = butanoate + CoA + H(+). It catalyses the reaction hexanoyl-CoA + H2O = hexanoate + CoA + H(+). It carries out the reaction octanoyl-CoA + H2O = octanoate + CoA + H(+). The catalysed reaction is decanoyl-CoA + H2O = decanoate + CoA + H(+). The enzyme catalyses dodecanoyl-CoA + H2O = dodecanoate + CoA + H(+). It catalyses the reaction tetradecanoyl-CoA + H2O = tetradecanoate + CoA + H(+). It carries out the reaction hexadecanoyl-CoA + H2O = hexadecanoate + CoA + H(+). Its pathway is lipid metabolism; fatty acid beta-oxidation. In terms of biological role, in the production of energy from fats, this is one of the enzymes that catalyzes the last step of the mitochondrial beta-oxidation pathway, an aerobic process breaking down fatty acids into acetyl-CoA. Using free coenzyme A/CoA, catalyzes the thiolytic cleavage of medium- to long-chain unbranched 3-oxoacyl-CoAs into acetyl-CoA and a fatty acyl-CoA shortened by two carbon atoms. Also catalyzes the condensation of two acetyl-CoA molecules into acetoacetyl-CoA and could be involved in the production of ketone bodies. Also displays hydrolase activity on various fatty acyl-CoAs. Thereby, could be responsible for the production of acetate in a side reaction to beta-oxidation. Abolishes BNIP3-mediated apoptosis and mitochondrial damage. This Bos taurus (Bovine) protein is 3-ketoacyl-CoA thiolase, mitochondrial (ACAA2).